Reading from the N-terminus, the 418-residue chain is Zinc metalloproteinase-disintegrin-like batroxstatin-2 (418 aa).

In terms of domain architecture, Peptidase M12B spans 10-206 (KYVKLVLVAD…DMPQCILEKP (197 aa)). Cystine bridges form between Cys-121–Cys-201, Cys-161–Cys-185, and Cys-163–Cys-168. Position 146 (His-146) interacts with Zn(2+). Glu-147 is an active-site residue. His-150 and His-156 together coordinate Zn(2+). Residues 214–299 (PPVCGNYFVE…AECTDRFQRN (86 aa)) form the Disintegrin domain. Ca(2+) contacts are provided by Val-216, Asn-219, Phe-221, Glu-223, Glu-226, and Asp-229. 14 disulfides stabilise this stretch: Cys-217–Cys-246, Cys-228–Cys-241, Cys-230–Cys-236, Cys-240–Cys-263, Cys-254–Cys-260, Cys-259–Cys-285, Cys-272–Cys-292, Cys-279–Cys-310, Cys-303–Cys-315, Cys-322–Cys-372, Cys-337–Cys-383, Cys-350–Cys-360, Cys-367–Cys-409, and Cys-403–Cys-414. Residues 278–280 (ECD) carry the D/ECD-tripeptide motif. Ca(2+)-binding residues include Asp-280, Met-281, Asp-283, Asp-294, and Arg-295. Asn-312 is a glycosylation site (N-linked (GlcNAc...) asparagine).

Belongs to the venom metalloproteinase (M12B) family. P-III subfamily. P-IIIc sub-subfamily. In terms of assembly, homodimer; disulfide-linked. It depends on Zn(2+) as a cofactor. As to expression, expressed by the venom gland.

It localises to the secreted. Snake venom zinc metalloprotease that induces apoptosis in vascular endothelial cells (VEC), without degrading the extracellular matrix (it cannot cleave collagen) or inhibiting adhesion of VEC. Has also fibrinogenolytic and hemorrhagic activities. The chain is Zinc metalloproteinase-disintegrin-like batroxstatin-2 from Bothrops atrox (Barba amarilla).